A 229-amino-acid polypeptide reads, in one-letter code: Putative N-acetylmannosamine-6-phosphate 2-epimerase (229 aa).

It belongs to the NanE family.

The enzyme catalyses an N-acyl-D-glucosamine 6-phosphate = an N-acyl-D-mannosamine 6-phosphate. The protein operates within amino-sugar metabolism; N-acetylneuraminate degradation; D-fructose 6-phosphate from N-acetylneuraminate: step 3/5. Functionally, converts N-acetylmannosamine-6-phosphate (ManNAc-6-P) to N-acetylglucosamine-6-phosphate (GlcNAc-6-P). In Actinobacillus pleuropneumoniae serotype 3 (strain JL03), this protein is Putative N-acetylmannosamine-6-phosphate 2-epimerase.